A 324-amino-acid polypeptide reads, in one-letter code: Protein GET4 (324 aa).

It belongs to the GET4 family. As to quaternary structure, interacts with GET3A.

It localises to the cytoplasm. The protein localises to the cytosol. Its function is as follows. Involved in the regulation of root hair growth. The chain is Protein GET4 from Arabidopsis thaliana (Mouse-ear cress).